We begin with the raw amino-acid sequence, 334 residues long: Holliday junction branch migration complex subunit RuvB (334 aa).

Residues 4–184 (ADRLISAAVI…FGIVQRLEFY (181 aa)) form a large ATPase domain (RuvB-L) region. Residues Ile-23, Arg-24, Gly-65, Lys-68, Thr-69, Thr-70, 131–133 (EDY), Arg-174, Tyr-184, and Arg-221 contribute to the ATP site. A Mg(2+)-binding site is contributed by Thr-69. A small ATPAse domain (RuvB-S) region spans residues 185 to 255 (QVADLEHIVS…VAMKALDMLN (71 aa)). The interval 258–334 (AEGFDFMDRK…YKHFGITREE (77 aa)) is head domain (RuvB-H). Residues Arg-294, Arg-313, and Arg-318 each contribute to the DNA site.

The protein belongs to the RuvB family. Homohexamer. Forms an RuvA(8)-RuvB(12)-Holliday junction (HJ) complex. HJ DNA is sandwiched between 2 RuvA tetramers; dsDNA enters through RuvA and exits via RuvB. An RuvB hexamer assembles on each DNA strand where it exits the tetramer. Each RuvB hexamer is contacted by two RuvA subunits (via domain III) on 2 adjacent RuvB subunits; this complex drives branch migration. In the full resolvosome a probable DNA-RuvA(4)-RuvB(12)-RuvC(2) complex forms which resolves the HJ.

Its subcellular location is the cytoplasm. The enzyme catalyses ATP + H2O = ADP + phosphate + H(+). The RuvA-RuvB-RuvC complex processes Holliday junction (HJ) DNA during genetic recombination and DNA repair, while the RuvA-RuvB complex plays an important role in the rescue of blocked DNA replication forks via replication fork reversal (RFR). RuvA specifically binds to HJ cruciform DNA, conferring on it an open structure. The RuvB hexamer acts as an ATP-dependent pump, pulling dsDNA into and through the RuvAB complex. RuvB forms 2 homohexamers on either side of HJ DNA bound by 1 or 2 RuvA tetramers; 4 subunits per hexamer contact DNA at a time. Coordinated motions by a converter formed by DNA-disengaged RuvB subunits stimulates ATP hydrolysis and nucleotide exchange. Immobilization of the converter enables RuvB to convert the ATP-contained energy into a lever motion, pulling 2 nucleotides of DNA out of the RuvA tetramer per ATP hydrolyzed, thus driving DNA branch migration. The RuvB motors rotate together with the DNA substrate, which together with the progressing nucleotide cycle form the mechanistic basis for DNA recombination by continuous HJ branch migration. Branch migration allows RuvC to scan DNA until it finds its consensus sequence, where it cleaves and resolves cruciform DNA. This Yersinia pseudotuberculosis serotype O:1b (strain IP 31758) protein is Holliday junction branch migration complex subunit RuvB.